Consider the following 160-residue polypeptide: Putative pre-16S rRNA nuclease (160 aa).

It belongs to the YqgF nuclease family.

Its subcellular location is the cytoplasm. In terms of biological role, could be a nuclease involved in processing of the 5'-end of pre-16S rRNA. This Rhodopseudomonas palustris (strain ATCC BAA-98 / CGA009) protein is Putative pre-16S rRNA nuclease.